We begin with the raw amino-acid sequence, 179 residues long: Large ribosomal subunit protein uL6 (179 aa).

This sequence belongs to the universal ribosomal protein uL6 family. As to quaternary structure, part of the 50S ribosomal subunit.

This protein binds to the 23S rRNA, and is important in its secondary structure. It is located near the subunit interface in the base of the L7/L12 stalk, and near the tRNA binding site of the peptidyltransferase center. This Pelodictyon phaeoclathratiforme (strain DSM 5477 / BU-1) protein is Large ribosomal subunit protein uL6.